The chain runs to 322 residues: Cytochrome c biogenesis protein CcsA (322 aa).

The next 8 membrane-spanning stretches (helical) occupy residues Val17–Leu37, Gly44–Gly64, Leu71–Phe91, Leu98–Leu118, Met143–Ile163, Val225–Asn245, Glu258–His273, and Ala286–Leu306.

This sequence belongs to the CcmF/CycK/Ccl1/NrfE/CcsA family. In terms of assembly, may interact with Ccs1.

It is found in the plastid. The protein localises to the chloroplast thylakoid membrane. Required during biogenesis of c-type cytochromes (cytochrome c6 and cytochrome f) at the step of heme attachment. The chain is Cytochrome c biogenesis protein CcsA from Vitis vinifera (Grape).